The following is a 139-amino-acid chain: Transcription antitermination protein NusB (139 aa).

Belongs to the NusB family.

In terms of biological role, involved in transcription antitermination. Required for transcription of ribosomal RNA (rRNA) genes. Binds specifically to the boxA antiterminator sequence of the ribosomal RNA (rrn) operons. In Escherichia coli (strain K12 / MC4100 / BW2952), this protein is Transcription antitermination protein NusB.